The primary structure comprises 216 residues: Transmembrane emp24 domain-containing protein eca (216 aa).

The first 20 residues, 1 to 20 (MRDQFICLALLLCALHSACG), serve as a signal peptide directing secretion. Over 21-182 (LYFHISETER…FRHTSESTNS (162 aa)) the chain is Lumenal. A GOLD domain is found at 30-126 (RKCFIEEVPD…QLRVHLDIQV (97 aa)). Residues 134-164 (ANVAQKEKLTELQLRIRQLLDQVEQITKEQN) are a coiled coil. A helical membrane pass occupies residues 183–203 (RVLWWSLAQTLVLVCMGFWQM). Over 204-216 (RHLKSFFEAKKLV) the chain is Cytoplasmic. A Prevents secretion from ER motif is present at residues 213-216 (KKLV).

Belongs to the EMP24/GP25L family.

The protein resides in the endoplasmic reticulum membrane. In terms of biological role, eca and bai are essential, though not redundant, for dorsoventral patterning of the embryo. Specifically required during early embryogenesis for the activity of maternal tkv, while the zygotic tkv is not affected. Involved in Golgi organization. The protein is Transmembrane emp24 domain-containing protein eca of Drosophila pseudoobscura pseudoobscura (Fruit fly).